We begin with the raw amino-acid sequence, 157 residues long: Endoribonuclease YbeY (157 aa).

Residues histidine 116, histidine 120, and histidine 126 each coordinate Zn(2+).

This sequence belongs to the endoribonuclease YbeY family. Requires Zn(2+) as cofactor.

The protein resides in the cytoplasm. Its function is as follows. Single strand-specific metallo-endoribonuclease involved in late-stage 70S ribosome quality control and in maturation of the 3' terminus of the 16S rRNA. This is Endoribonuclease YbeY from Pseudarthrobacter chlorophenolicus (strain ATCC 700700 / DSM 12829 / CIP 107037 / JCM 12360 / KCTC 9906 / NCIMB 13794 / A6) (Arthrobacter chlorophenolicus).